The chain runs to 129 residues: Lysozyme C (129 aa).

A C-type lysozyme domain is found at 1 to 129 (KVYGRCELAA…VQAWIRGCRL (129 aa)). Intrachain disulfides connect C6-C127, C30-C115, C64-C80, and C76-C94. Active-site residues include E35 and D52.

The protein belongs to the glycosyl hydrolase 22 family. In terms of assembly, monomer.

The protein localises to the secreted. The enzyme catalyses Hydrolysis of (1-&gt;4)-beta-linkages between N-acetylmuramic acid and N-acetyl-D-glucosamine residues in a peptidoglycan and between N-acetyl-D-glucosamine residues in chitodextrins.. Its function is as follows. Lysozymes have primarily a bacteriolytic function; those in tissues and body fluids are associated with the monocyte-macrophage system and enhance the activity of immunoagents. The protein is Lysozyme C (LYZ) of Tragopan satyra (Satyr tragopan).